We begin with the raw amino-acid sequence, 468 residues long: Arginine biosynthesis bifunctional protein ArgJ, mitochondrial (468 aa).

The transit peptide at 1–23 directs the protein to the mitochondrion; that stretch reads MVGFSRCALSQLRQPKAQLVRSF. The substrate site is built by Thr198, Lys227, Thr238, Glu324, Asn463, and Thr468. Catalysis depends on Thr238, which acts as the Nucleophile.

Belongs to the ArgJ family. In terms of assembly, heterodimer of an alpha and a beta chain. The alpha and beta chains are autoproteolytically processed from a single precursor protein within the mitochondrion.

The protein localises to the mitochondrion matrix. It catalyses the reaction N(2)-acetyl-L-ornithine + L-glutamate = N-acetyl-L-glutamate + L-ornithine. The enzyme catalyses L-glutamate + acetyl-CoA = N-acetyl-L-glutamate + CoA + H(+). It functions in the pathway amino-acid biosynthesis; L-arginine biosynthesis; L-ornithine and N-acetyl-L-glutamate from L-glutamate and N(2)-acetyl-L-ornithine (cyclic): step 1/1. The protein operates within amino-acid biosynthesis; L-arginine biosynthesis; N(2)-acetyl-L-ornithine from L-glutamate: step 1/4. Functionally, catalyzes two activities which are involved in the cyclic version of arginine biosynthesis: the synthesis of acetylglutamate from glutamate and acetyl-CoA, and of ornithine by transacetylation between acetylornithine and glutamate. The protein is Arginine biosynthesis bifunctional protein ArgJ, mitochondrial of Podospora anserina (strain S / ATCC MYA-4624 / DSM 980 / FGSC 10383) (Pleurage anserina).